We begin with the raw amino-acid sequence, 257 residues long: uncharacterized protein (257 aa).

Residues 7–27 form a helical membrane-spanning segment; the sequence is IGILEIVVILSILITSVSLAY.

The protein localises to the membrane. This is an uncharacterized protein from Methanocaldococcus jannaschii (strain ATCC 43067 / DSM 2661 / JAL-1 / JCM 10045 / NBRC 100440) (Methanococcus jannaschii).